A 571-amino-acid chain; its full sequence is Proline--tRNA ligase (571 aa).

It belongs to the class-II aminoacyl-tRNA synthetase family. ProS type 1 subfamily. Homodimer.

The protein localises to the cytoplasm. It carries out the reaction tRNA(Pro) + L-proline + ATP = L-prolyl-tRNA(Pro) + AMP + diphosphate. Catalyzes the attachment of proline to tRNA(Pro) in a two-step reaction: proline is first activated by ATP to form Pro-AMP and then transferred to the acceptor end of tRNA(Pro). As ProRS can inadvertently accommodate and process non-cognate amino acids such as alanine and cysteine, to avoid such errors it has two additional distinct editing activities against alanine. One activity is designated as 'pretransfer' editing and involves the tRNA(Pro)-independent hydrolysis of activated Ala-AMP. The other activity is designated 'posttransfer' editing and involves deacylation of mischarged Ala-tRNA(Pro). The misacylated Cys-tRNA(Pro) is not edited by ProRS. The polypeptide is Proline--tRNA ligase (Pseudomonas aeruginosa (strain UCBPP-PA14)).